Here is a 372-residue protein sequence, read N- to C-terminus: DSC E3 ubiquitin ligase complex subunit 2 (372 aa).

Transmembrane regions (helical) follow at residues 26–46 (VVAG…LHLL), 54–74 (ILLW…LFII), 95–115 (YMFI…SLLF), 126–146 (TFLI…TVFV), and 160–180 (VIPM…NAFL). The disordered stretch occupies residues 246–314 (TENENQVENP…LPTGPASQLY (69 aa)). Positions 249 to 268 (ENQVENPVSNADANDSPTRQ) are enriched in polar residues. The residue at position 264 (Ser-264) is a Phosphoserine. Thr-266 is subject to Phosphothreonine. The span at 269–284 (NARATAIASSSNTAAS) shows a compositional bias: low complexity. A compositionally biased stretch (polar residues) spans 286–305 (RNRQQISHPPLGRTSSSSVL). A UBA domain is found at 332–368 (EDINTVQTIMQTSRAQAIQALSQTNDVQRAVELLLEQ).

Component of the DSC E3 ubiquitin ligase complex composed of dsc1, dsc2, dsc3 and dsc4.

It is found in the golgi apparatus membrane. It carries out the reaction S-ubiquitinyl-[E2 ubiquitin-conjugating enzyme]-L-cysteine + [acceptor protein]-L-lysine = [E2 ubiquitin-conjugating enzyme]-L-cysteine + N(6)-ubiquitinyl-[acceptor protein]-L-lysine.. The protein operates within protein modification; protein ubiquitination. Its function is as follows. Component of the DSC E3 ubiquitin ligase complex which is required for the sre1 transcriptional activator proteolytic cleavage to release the soluble transcription factor from the membrane in low oxygen or sterol conditions. The complex also plays an important role in the multivesicular body (MVB) pathway and functions in a post-endoplasmic reticulum pathway for protein degradation. This Schizosaccharomyces pombe (strain 972 / ATCC 24843) (Fission yeast) protein is DSC E3 ubiquitin ligase complex subunit 2 (dsc2).